The chain runs to 130 residues: Metastasis-suppressor KiSS-1 (130 aa).

Residues 1–19 form the signal peptide; sequence MISMASWQLLLLLCVATYG. The disordered stretch occupies residues 49–82; sequence KESRYAESKPGSAGLRARRSSPCPPVEGPAGRQR. Residues Cys-71 and Cys-85 are joined by a disulfide bond. Tyr-110 bears the Phosphotyrosine mark. Residues 110-119 form an essential for receptor binding and receptor activation region; sequence YNWNSFGLRY. Tyrosine amide is present on Tyr-119.

The protein belongs to the KISS1 family. As to expression, weak in all tissue types with highest levels in lung and 15- 17-day embryos. Expressed in areas of the hypothalamus implicated in the neuroendocrine regulation of gonadotropin secretion, including the anteroventral periventricular nucleus, the periventricular nucleus, and the arcuate nucleus.

The protein localises to the secreted. Functionally, metastasis suppressor protein. May regulate events downstream of cell-matrix adhesion, perhaps involving cytoskeletal reorganization. Generates a C-terminally amidated peptide, metastin which functions as the endogenous ligand of the G-protein coupled receptor GPR54. Activation of the receptor inhibits cell proliferation and cell migration, key characteristics of tumor metastasis. The receptor is also essential for normal gonadotropin-released hormone physiology and for puberty. The hypothalamic KiSS1/GPR54 system is a pivotal factor in central regulation of the gonadotropic axis at puberty and in adulthood. Intracerebroventricular administration induces an increase in serum LH and FSH levels in prepubertal male and female as well as in adult animals. This chain is Metastasis-suppressor KiSS-1 (Kiss1), found in Mus musculus (Mouse).